A 194-amino-acid polypeptide reads, in one-letter code: Fibroblast growth factor 7 (194 aa).

A signal peptide spans 1 to 31; the sequence is MRKWILTRILPTPLYRPCFHLVCLVGTISLA. Residues asparagine 45 and asparagine 149 are each glycosylated (N-linked (GlcNAc...) asparagine).

The protein belongs to the heparin-binding growth factors family. As to quaternary structure, interacts with FGFBP1. Interacts with FGFR2. Affinity between fibroblast growth factors (FGFs) and their receptors is increased by heparan sulfate glycosaminoglycans that function as coreceptors.

Its function is as follows. Growth factor active on keratinocytes. Possible major paracrine effector of normal epithelial cell proliferation. This Rattus norvegicus (Rat) protein is Fibroblast growth factor 7 (Fgf7).